The chain runs to 469 residues: SHC-transforming protein 1 (469 aa).

Residues 1–26 (MNKLSGGGGRRTRVEGGQLGGEEWTR) are disordered. Serine 29 carries the phosphoserine modification. An N6-acetyllysine modification is found at lysine 44. In terms of domain architecture, PID spans 46–229 (MGPGVSYLVR…AGFDGSAWDE (184 aa)). A CH1 region spans residues 230-373 (EEEELPDHQY…SMAEQLQGES (144 aa)). 3 positions are modified to phosphotyrosine: tyrosine 239, tyrosine 240, and tyrosine 313. The interval 322 to 344 (ARQAGGGAGPPNPSVNGSAPRDL) is disordered. Phosphoserine is present on serine 339. Residues 374–465 (WFHGKLSRRE…GSELCLQQPV (92 aa)) enclose the SH2 domain.

As to quaternary structure, interacts with CPNE3; this interaction may mediate the binding of CPNE3 with ERBB2. Interacts with the NPXY motif of tyrosine-phosphorylated IGF1R and INSR in vitro via the PID domain. Once activated, binds to GRB2. Interacts with tyrosine-phosphorylated CD3T and DDR2. Interacts with the N-terminal region of APS. Interacts with phosphorylated LRP1 and IRS4. Interacts with INPP5D/SHIP1 and INPPL1/SHIP2. Interacts with ALK, GAB2, GRB7 and KIT. Interacts with PTPN6/SHP (tyrosine phosphorylated). Identified in a complex containing FGFR4, NCAM1, CDH2, PLCG1, FRS2A, SRC, SHC1, GAP43 and CTTN. Interacts with EPHB1 and GRB2; activates the MAPK/ERK cascade to regulate cell migration. Interacts with PDGFRB (tyrosine-phosphorylated). Interacts with ERBB4. Interacts with TEK/TIE2 (tyrosine-phosphorylated). Interacts with PTK2/FAK1. Interacts with FLT4 (tyrosine-phosphorylated). Interacts with the Trk receptors NTRK1, NTRK2 and NTRK3; in a phosphotyrosine-dependent manner. Interacts with CEACAM1; this interaction is CEACAM1-phosphorylation-dependent and mediates interaction with EGFR or INSR resulting in decrease coupling of SHC1 to the MAPK3/ERK1-MAPK1/ERK2 pathway. Interacts (via PID domain) with PEAK1 (when phosphorylated). Found in a complex with PPP1CA, PPP1CC, SHC1 and PEAK1. In terms of processing, phosphorylated by activated epidermal growth factor receptor. Phosphorylated in response to KIT signaling. Tyrosine phosphorylated in response to FLT3 signaling and by ligand-activated ALK. Tyrosine phosphorylated by TEK/TIE2. Tyrosine phosphorylated by ligand-activated PDGFRB. May be tyrosine phosphorylated by activated PTK2/FAK1. Dephosphorylation by PTPN2 may regulate interaction with GRB2. Phosphorylated in response to FLT4 signaling. Tyrosine phosphorylated by activated PTK2B/PYK2.

The protein localises to the cytoplasm. It localises to the cell junction. The protein resides in the focal adhesion. In terms of biological role, signaling adapter that couples activated growth factor receptors to signaling pathways. Participates in a signaling cascade initiated by activated KIT and KITLG/SCF. Participates in signaling downstream of the angiopoietin receptor TEK/TIE2, and plays a role in the regulation of endothelial cell migration and sprouting angiogenesis. In Rattus norvegicus (Rat), this protein is SHC-transforming protein 1 (Shc1).